Consider the following 475-residue polypeptide: Chromosomal replication initiator protein DnaA (475 aa).

The segment at 1–73 is domain I, interacts with DnaA modulators; it reads MTNSEQERWS…LSCWQAEMPE (73 aa). The domain II stretch occupies residues 73–131; the sequence is EVHRIDLSVRTAMRCATPAKEAPVAVEARRAERGDAKPADTRAPVMTPVAASHDALGGS. Residues 132–354 form a domain III, AAA+ region region; sequence PLDPRLTFAS…GAINRLLAHS (223 aa). Residues Gly-179, Gly-181, Lys-182, and Thr-183 each coordinate ATP. Positions 355–475 are domain IV, binds dsDNA; the sequence is KLNNQPVTLD…VEALKRQLQD (121 aa).

This sequence belongs to the DnaA family. Oligomerizes as a right-handed, spiral filament on DNA at oriC.

It localises to the cytoplasm. Its function is as follows. Plays an essential role in the initiation and regulation of chromosomal replication. ATP-DnaA binds to the origin of replication (oriC) to initiate formation of the DNA replication initiation complex once per cell cycle. Binds the DnaA box (a 9 base pair repeat at the origin) and separates the double-stranded (ds)DNA. Forms a right-handed helical filament on oriC DNA; dsDNA binds to the exterior of the filament while single-stranded (ss)DNA is stabiized in the filament's interior. The ATP-DnaA-oriC complex binds and stabilizes one strand of the AT-rich DNA unwinding element (DUE), permitting loading of DNA polymerase. After initiation quickly degrades to an ADP-DnaA complex that is not apt for DNA replication. Binds acidic phospholipids. The protein is Chromosomal replication initiator protein DnaA of Bradyrhizobium sp. (strain BTAi1 / ATCC BAA-1182).